Here is a 26-residue protein sequence, read N- to C-terminus: U1-poneritoxin-Ni1b (26 aa).

This sequence belongs to the non-disulfide-bridged peptide (NDBP) superfamily. Medium-length antimicrobial peptide (group 3) family. Ponericin-W subfamily. As to expression, expressed by the venom gland.

The protein resides in the secreted. It is found in the target cell membrane. Has a broad spectrum of activity against both Gram-positive and Gram-negative bacteria and S.cerevisiae. Has insecticidal and hemolytic activities. May act by disrupting the integrity of the bacterial cell membrane. In Neoponera inversa (Ant), this protein is U1-poneritoxin-Ni1b.